The following is a 144-amino-acid chain: MLMPKRVKYRKQQRGRIKGNATRGNTLTYGEYGLQALEPGWITATQIEAARVAMTRFIKRGGKVWIKIFPDKPVTKKPAETRMGSGKGSPEFWVAVVKPGRVLFEIAGVSEEVAKEALRLAMHKLPIKTKFLKREELGGEDNEG.

The protein belongs to the universal ribosomal protein uL16 family. As to quaternary structure, part of the 50S ribosomal subunit.

Its function is as follows. Binds 23S rRNA and is also seen to make contacts with the A and possibly P site tRNAs. This chain is Large ribosomal subunit protein uL16, found in Thermoanaerobacter pseudethanolicus (strain ATCC 33223 / 39E) (Clostridium thermohydrosulfuricum).